A 173-amino-acid chain; its full sequence is Crossover junction endodeoxyribonuclease RuvC (173 aa).

Catalysis depends on residues Asp8, Glu67, and Asp139. 3 residues coordinate Mg(2+): Asp8, Glu67, and Asp139.

Belongs to the RuvC family. Homodimer which binds Holliday junction (HJ) DNA. The HJ becomes 2-fold symmetrical on binding to RuvC with unstacked arms; it has a different conformation from HJ DNA in complex with RuvA. In the full resolvosome a probable DNA-RuvA(4)-RuvB(12)-RuvC(2) complex forms which resolves the HJ. Requires Mg(2+) as cofactor.

Its subcellular location is the cytoplasm. The catalysed reaction is Endonucleolytic cleavage at a junction such as a reciprocal single-stranded crossover between two homologous DNA duplexes (Holliday junction).. Its function is as follows. The RuvA-RuvB-RuvC complex processes Holliday junction (HJ) DNA during genetic recombination and DNA repair. Endonuclease that resolves HJ intermediates. Cleaves cruciform DNA by making single-stranded nicks across the HJ at symmetrical positions within the homologous arms, yielding a 5'-phosphate and a 3'-hydroxyl group; requires a central core of homology in the junction. The consensus cleavage sequence is 5'-(A/T)TT(C/G)-3'. Cleavage occurs on the 3'-side of the TT dinucleotide at the point of strand exchange. HJ branch migration catalyzed by RuvA-RuvB allows RuvC to scan DNA until it finds its consensus sequence, where it cleaves and resolves the cruciform DNA. The sequence is that of Crossover junction endodeoxyribonuclease RuvC from Citrobacter koseri (strain ATCC BAA-895 / CDC 4225-83 / SGSC4696).